Consider the following 650-residue polypeptide: MSSVLMSKTVTPFLREHIPSIYAPIGKPGNQETARAENPNSKYCYRHHPDSKCRRAADKAKMVMIQSELDKLTSADQQAVTHVWSLFSAAPARHRDLMLQGILSQLCFPQLSFVSREVNEALKIDFISALPVELAQKVLCYLDTVSLTKAAQVSQRWRTLADSDAVWVRMCEQHVNRKCTKCGWGLPLLERKKLRNYTRQRQLAKGGPQGRVTELADSHDSQDRSVNQHGKRPAAEAEEEDPIKKRQCMAAAEASKAVTQPKTRSWKAVYRDRWQVSYNWKNSRYKLSVLKGHENGVTCLQLDDNILATGSYDTTIKIWNIETEECIRTLVGHTAGIRALQFDDSKLISGSLDHTIKVWNWHTGECLSTFAAHTDSVISVHFDGHLLASGSSDKTVKIFDFNSKETYCLKGHSDWVNSTHVDIKSRTVFSASDDTTIKLWDLDTRQVIRTYEGHVGHVQQVLILPPEYEPDEEVLNGASQDNQDAMSVSSGGSGSPSMSHAQIERAGSPGSHSSSHNLLPSSLPSGDEDVRHLYGSAFVADESRPLPPRYFMTGGLDSTMRLWDSATGRCLRTLFGHLEGVWSLAGDTIRVISGANDGMVKTWEPRSGKCDATYTGHCGPVTCVGLSDSLMASGSEDGTIRLHSFKPCRQ.

The F-box domain occupies 124–170 (IDFISALPVELAQKVLCYLDTVSLTKAAQVSQRWRTLADSDAVWVRM). Positions 200–244 (QRQLAKGGPQGRVTELADSHDSQDRSVNQHGKRPAAEAEEEDPIK) are disordered. A compositionally biased stretch (basic and acidic residues) spans 214–223 (ELADSHDSQD). WD repeat units lie at residues 292–320 (GHEN…KIWN), 332–360 (GHTA…KVWN), 372–400 (AHTD…KIFD), 411–441 (GHSD…KLWD), and 453–488 (GHVG…AMSV). The segment at 482–525 (NQDAMSVSSGGSGSPSMSHAQIERAGSPGSHSSSHNLLPSSLPS) is disordered. 2 stretches are compositionally biased toward low complexity: residues 487–499 (SVSS…PSMS) and 507–525 (GSPG…SLPS). WD repeat units lie at residues 528–564 (EDVR…RLWD), 576–604 (GHLE…KTWE), and 616–644 (GHCG…RLHS).

The protein belongs to the WD repeat MET30/SCONB/SCON-2 family. As to quaternary structure, component of the SCF(scon-2) E3 ubiquitin ligase complex.

The protein operates within protein modification; protein ubiquitination. Functionally, component of the SCF(scon-2) E3 ubiquitin ligase complex involved in the regulation of sulfur metabolite repression, probably by mediating the inactivation or degradation of the metR transcription factor. This chain is Probable E3 ubiquitin ligase complex SCF subunit scon-2 (scon-2), found in Neurospora crassa (strain ATCC 24698 / 74-OR23-1A / CBS 708.71 / DSM 1257 / FGSC 987).